The sequence spans 490 residues: MDLVVFLALTLSCLILLSLWRQSSGRGKLPPGPTPLPIIGNFLQIDVKNISQSFTNFSKAYGPVFTLYLGSKPTVILHGYEAVKEALIDRGEEFAGRGSFPMAEKIIKGFGVVFSNGNRWKEMRRFTLMTLRNLGMGKRNIEDRVQEEAQCLVEELRKTKGSPCDPTFILSCAPCNVICSIIFQNRFDYKDKEFLILMDKINENVKILSSPWLQVCNSFPSLIDYCPGSHHKIVKNFNYLKSYLLEKIKEHKESLDVTNPRDFIDYYLIKQKQVNHIEQSEFSLENLASTINDLFGAGTETTSTTLRYALLLLLKYPDVTAKVQEEIDRVVGRHRSPCMQDRSHMPYTDAMIHEVQRFIDLLPTSLPHAVTCDIKFRKYLIPKGTTVITSLSSVLHDSKEFPNPEMFDPGHFLNGNGNFKKSDYFMPFSTGKRICAGEGLARMELFLILTTILQNFKLKSLVHPKEIDITPVMNGFASLPPPYQLCFIPL.

The signal sequence occupies residues 1-25; sequence MDLVVFLALTLSCLILLSLWRQSSG. 3 positions are modified to N6-acetyllysine: Lys-249, Lys-252, and Lys-375. Residue Cys-435 participates in heme binding.

This sequence belongs to the cytochrome P450 family. Requires heme as cofactor. Expressed in liver as well as in extrahepatic tissues including brain, kidney, lung, heart, and intestine.

It localises to the endoplasmic reticulum membrane. It is found in the microsome membrane. The catalysed reaction is an organic molecule + reduced [NADPH--hemoprotein reductase] + O2 = an alcohol + oxidized [NADPH--hemoprotein reductase] + H2O + H(+). It carries out the reaction (5Z,8Z,11Z,14Z)-eicosatetraenoate + reduced [NADPH--hemoprotein reductase] + O2 = 14,15-epoxy-(5Z,8Z,11Z)-eicosatrienoate + oxidized [NADPH--hemoprotein reductase] + H2O + H(+). The protein operates within lipid metabolism; arachidonate metabolism. In terms of biological role, a cytochrome P450 monooxygenase that selectively catalyzes the epoxidation of 14,15 double bond of (5Z,8Z,11Z,14Z)-eicosatetraenoic acid (arachidonate) forming 14,15-epoxyeicosatrienoic acid (14,15-EET) regioisomer. Mechanistically, uses molecular oxygen inserting one oxygen atom into a substrate, and reducing the second into a water molecule, with two electrons provided by NADPH via cytochrome P450 reductase (CPR; NADPH--hemoprotein reductase). In Mus musculus (Mouse), this protein is Cytochrome P450 2C29.